A 1001-amino-acid polypeptide reads, in one-letter code: X-linked retinitis pigmentosa GTPase regulator (1001 aa).

RCC1 repeat units lie at residues 54 to 105 (NKLY…STDT), 106 to 158 (GGVY…LTED), 159 to 208 (GKLF…VTMD), 209 to 261 (GELY…LTEK), 262 to 313 (VVYA…MTEL), and 314 to 367 (GLLY…FATP). Residues 404-428 (SLSARLRRRERERPPCSASMVGTLP) are disordered. The residue at position 518 (serine 518) is a Phosphoserine. Basic and acidic residues-rich tracts occupy residues 631–641 (KKIRESEENSK) and 659–671 (EDNKDIAEERRSS). 4 disordered regions span residues 631–738 (KKIR…WYDR), 794–869 (NLEF…EGSE), 902–925 (PKGHMYDRVKSSSSEILGGNDPTS), and 962–1001 (GDQIALQSDKKDANQNHMGQNLQDSTTPNMEGKSKSCTIL). Composition is skewed to acidic residues over residues 679–691 (SETELVEEPDSYM) and 717–731 (EKDEKDEKDDDEVET). Composition is skewed to basic and acidic residues over residues 794–818 (NLEFEGDRKEAKAEAPSDVITEKEA), 847–857 (EERKEGEKEIV), and 902–911 (PKGHMYDRVK). Residues 976 to 1001 (QNHMGQNLQDSTTPNMEGKSKSCTIL) are compositionally biased toward polar residues. Cysteine methyl ester is present on cysteine 998. The S-geranylgeranyl cysteine moiety is linked to residue cysteine 998. A propeptide spans 999 to 1001 (TIL) (removed in mature form).

In terms of assembly, interacts with SPATA7. Interacts with PDE6D. Interacts with RPGRIP1 and RPGRIP1L; PDE6D, RPGRIP1 and RPGRIP1L may compete for the same binding sites. Interacts with NPM1. Interacts with PDE6D. Isoform 5 interacts (via N-terminus) with SMC1A and SMC3. Isoform 5 interacts with CEP290. Interacts with WHRN. Interacts with RAB37 and RAB8A (in GDP-bound forms); functions as GEF for RAB37 and RAB8A. In terms of processing, prenylated. Expressed in the retina (at protein level). Located mainly in the connecting cilia between the outer segment and inner segment and also observed in the outer plexiform layer, inner plexiform layer, and ganglion cell layer of the retinas. Isoform 1: Expressed in the retina (at protein level). Isoform 5: Expressed in the retina (at protein level). Expressed in the brain. Expressed in the testis (at protein level). Expressed in kidney (at protein level).

Its subcellular location is the golgi apparatus. It is found in the cytoplasm. The protein resides in the cytoskeleton. It localises to the microtubule organizing center. The protein localises to the centrosome. Its subcellular location is the cell projection. It is found in the cilium. The protein resides in the cilium basal body. It localises to the cilium axoneme. The protein localises to the flagellum axoneme. In terms of biological role, acts as a guanine-nucleotide releasing factor (GEF) for RAB8A and RAB37 by promoting the conversion of inactive RAB-GDP to the active form RAB-GTP. GEF activity towards RAB8A may facilitate ciliary trafficking by modulating ciliary intracellular localization of RAB8A. GEF activity towards RAB37 maintains autophagic homeostasis and retinal function. Involved in photoreceptor integrity. May control cilia formation by regulating actin stress filaments and cell contractility. May be involved in microtubule organization and regulation of transport in primary cilia. Functionally, isoform 5 may play a critical role in spermatogenesis and in intraflagellar transport processes. The chain is X-linked retinitis pigmentosa GTPase regulator from Mus musculus (Mouse).